A 371-amino-acid chain; its full sequence is Peptide chain release factor 2 (371 aa).

Position 253 is an N5-methylglutamine (Q253).

The protein belongs to the prokaryotic/mitochondrial release factor family. In terms of processing, methylated by PrmC. Methylation increases the termination efficiency of RF2.

It is found in the cytoplasm. Its function is as follows. Peptide chain release factor 2 directs the termination of translation in response to the peptide chain termination codons UGA and UAA. This is Peptide chain release factor 2 (prfB) from Mycobacterium bovis (strain ATCC BAA-935 / AF2122/97).